Consider the following 528-residue polypeptide: MSLQMVSAVSNSSLLQPGSSLLNFDGHVFFFGQKGWPKRSCPTGVFFLDIKQNELKMKPAAFSRDSCYLPPLRYPAICTLRGNGESDKHQYIIHGGKTPNNDLSDKIYIMSMVNKTTKKTTFQCIEKDLGGDVPEARYGHTINVVHSRGKSMIVIFGGRSYIPLAQRTTEKWNSVVDCLPSVFLVDFEFGCCTSYILPELQDGLSFHVSVARDDTIYILGGHSLQNNTRPPSLYKLKVDLPLGSPCVTCSILPGGISVSSGIVTQTGDTEFVLVGGYQSDNQKRMICNTIVLEDNKIEIVERVSPDWTPDIKHCRMWFGCDMGKGSVLLGIPGANKQLISDANYFYILRCNKAEEDEEEELTAQTCSQASTEDQGDSTPFEDSEEFSFSAEASSFDVDDIDTYNEDDEEDESETGYWIICCASCNIDINTWVPFYSTELNKPAMILCSSGSGHWVHAQCMDLSESMLLQLSEANVKYFCNEHVHLNKGLQTPKKAVHLKKQPMKRLHKKKTMKLTTPVKKSFLRRLFE.

The segment at Q364–S383 is disordered. The span at D373–S383 shows a compositional bias: acidic residues. A PHD-type; atypical zinc finger spans residues W417 to L485. Residues C420, C424, C447, H453, H456, C459, C479, and H482 each contribute to the Zn(2+) site.

Belongs to the RAG2 family. In terms of assembly, component of the RAG complex composed of core components RAG1 and RAG2.

The protein resides in the nucleus. Its function is as follows. Core component of the RAG complex, a multiprotein complex that mediates the DNA cleavage phase during V(D)J recombination. V(D)J recombination assembles a diverse repertoire of immunoglobulin and T-cell receptor genes in developing B and T lymphocytes through rearrangement of different V (variable), in some cases D (diversity), and J (joining) gene segments. DNA cleavage by the RAG complex occurs in 2 steps: a first nick is introduced in the top strand immediately upstream of the heptamer, generating a 3'-hydroxyl group that can attack the phosphodiester bond on the opposite strand in a direct transesterification reaction, thereby creating 4 DNA ends: 2 hairpin coding ends and 2 blunt, 5'-phosphorylated ends. In the RAG complex, RAG2 is not the catalytic component but is required for all known catalytic activities mediated by RAG1. It probably acts as a sensor of chromatin state that recruits the RAG complex to H3K4me3. This is V(D)J recombination-activating protein 2 (RAG2) from Gallus gallus (Chicken).